Here is an 87-residue protein sequence, read N- to C-terminus: DNA-directed RNA polymerase subunit omega (87 aa).

This sequence belongs to the RNA polymerase subunit omega family. As to quaternary structure, the RNAP catalytic core consists of 2 alpha, 1 beta, 1 beta' and 1 omega subunit. When a sigma factor is associated with the core the holoenzyme is formed, which can initiate transcription.

The catalysed reaction is RNA(n) + a ribonucleoside 5'-triphosphate = RNA(n+1) + diphosphate. Functionally, promotes RNA polymerase assembly. Latches the N- and C-terminal regions of the beta' subunit thereby facilitating its interaction with the beta and alpha subunits. The protein is DNA-directed RNA polymerase subunit omega of Thioalkalivibrio sulfidiphilus (strain HL-EbGR7).